Here is a 314-residue protein sequence, read N- to C-terminus: Ribonuclease Z (314 aa).

Zn(2+) is bound by residues His61, His63, Asp65, His66, His137, Asp207, and His263. Asp65 acts as the Proton acceptor in catalysis.

Belongs to the RNase Z family. In terms of assembly, homodimer. It depends on Zn(2+) as a cofactor.

It carries out the reaction Endonucleolytic cleavage of RNA, removing extra 3' nucleotides from tRNA precursor, generating 3' termini of tRNAs. A 3'-hydroxy group is left at the tRNA terminus and a 5'-phosphoryl group is left at the trailer molecule.. Functionally, zinc phosphodiesterase, which displays some tRNA 3'-processing endonuclease activity. Probably involved in tRNA maturation, by removing a 3'-trailer from precursor tRNA. In Thermococcus kodakarensis (strain ATCC BAA-918 / JCM 12380 / KOD1) (Pyrococcus kodakaraensis (strain KOD1)), this protein is Ribonuclease Z.